We begin with the raw amino-acid sequence, 138 residues long: Large ribosomal subunit protein uL16 (138 aa).

Over residues 1 to 16 (MLIPKRVKFRRQHRPN) the composition is skewed to basic residues. Positions 1–25 (MLIPKRVKFRRQHRPNRSGMSKGGN) are disordered.

Belongs to the universal ribosomal protein uL16 family. Part of the 50S ribosomal subunit.

Functionally, binds 23S rRNA and is also seen to make contacts with the A and possibly P site tRNAs. This Corynebacterium urealyticum (strain ATCC 43042 / DSM 7109) protein is Large ribosomal subunit protein uL16.